Reading from the N-terminus, the 275-residue chain is Thiazole synthase (275 aa).

The active-site Schiff-base intermediate with DXP is the Lys116. Residues Gly177, 203-204 (AG), and 225-226 (NT) each bind 1-deoxy-D-xylulose 5-phosphate.

It belongs to the ThiG family. As to quaternary structure, homotetramer. Forms heterodimers with either ThiH or ThiS.

The protein resides in the cytoplasm. The enzyme catalyses [ThiS sulfur-carrier protein]-C-terminal-Gly-aminoethanethioate + 2-iminoacetate + 1-deoxy-D-xylulose 5-phosphate = [ThiS sulfur-carrier protein]-C-terminal Gly-Gly + 2-[(2R,5Z)-2-carboxy-4-methylthiazol-5(2H)-ylidene]ethyl phosphate + 2 H2O + H(+). It functions in the pathway cofactor biosynthesis; thiamine diphosphate biosynthesis. Catalyzes the rearrangement of 1-deoxy-D-xylulose 5-phosphate (DXP) to produce the thiazole phosphate moiety of thiamine. Sulfur is provided by the thiocarboxylate moiety of the carrier protein ThiS. In vitro, sulfur can be provided by H(2)S. This is Thiazole synthase from Acaryochloris marina (strain MBIC 11017).